The sequence spans 156 residues: Small ribosomal subunit protein uS7 (156 aa).

This sequence belongs to the universal ribosomal protein uS7 family. In terms of assembly, part of the 30S ribosomal subunit. Contacts proteins S9 and S11.

In terms of biological role, one of the primary rRNA binding proteins, it binds directly to 16S rRNA where it nucleates assembly of the head domain of the 30S subunit. Is located at the subunit interface close to the decoding center, probably blocks exit of the E-site tRNA. In Ruminiclostridium cellulolyticum (strain ATCC 35319 / DSM 5812 / JCM 6584 / H10) (Clostridium cellulolyticum), this protein is Small ribosomal subunit protein uS7.